We begin with the raw amino-acid sequence, 336 residues long: MSKPVKAAVFGTGSWGTAFGTVLADAGCEVTLWGRRAALADAVNSTRTNPDYLPGVELPENLRATTDAAEAARDADFTVLAVPSQTLRAGLADWTPLLAPGTVLVSLMKGVELGSAMRMSEVIGDVAKVGAERIAVVTGPNLAREIAARMPAAAVVACPDETVAQRLQAACHTPYFRPYTNTDVVGCELGGAVKNVIGLAVGIADGMGLGDNAKGSLITRGLAETTRLGVALGADPLTFSGLAGLGDLVATCSSPLSRNHTFGTNLGKGMTLEETNAVTKQTAEGVKSCESVLDLARRHGVDMPITETVVAIVHEGKSPVVAVKELMSRSAKPERR.

Residues serine 14, tryptophan 15, arginine 35, arginine 36, and lysine 109 each contribute to the NADPH site. The sn-glycerol 3-phosphate site is built by lysine 109 and glycine 139. An NADPH-binding site is contributed by alanine 143. 5 residues coordinate sn-glycerol 3-phosphate: lysine 194, aspartate 247, serine 257, arginine 258, and asparagine 259. Residue lysine 194 is the Proton acceptor of the active site. Arginine 258 contacts NADPH. Glutamate 284 serves as a coordination point for NADPH.

This sequence belongs to the NAD-dependent glycerol-3-phosphate dehydrogenase family.

The protein localises to the cytoplasm. The enzyme catalyses sn-glycerol 3-phosphate + NAD(+) = dihydroxyacetone phosphate + NADH + H(+). The catalysed reaction is sn-glycerol 3-phosphate + NADP(+) = dihydroxyacetone phosphate + NADPH + H(+). It participates in membrane lipid metabolism; glycerophospholipid metabolism. Functionally, catalyzes the reduction of the glycolytic intermediate dihydroxyacetone phosphate (DHAP) to sn-glycerol 3-phosphate (G3P), the key precursor for phospholipid synthesis. This is Glycerol-3-phosphate dehydrogenase [NAD(P)+] from Streptomyces coelicolor (strain ATCC BAA-471 / A3(2) / M145).